A 215-amino-acid polypeptide reads, in one-letter code: Inositol diphosphatase DSP1 (215 aa).

Residues 58-209 (NFSMVDNGIF…VSSFSHIPMS (152 aa)) enclose the Tyrosine-protein phosphatase domain. A WPD loop important for active site topology region spans residues 114-126 (FGIEGNKEPFVNI). 4 residues coordinate 1D-myo-inositol hexakisphosphate: Asn125, Ile126, His129, and Lys130. The active-site Phosphocysteine intermediate is the Cys150.

It belongs to the protein-tyrosine phosphatase family. Atypical dual-specificity phosphatase Siw14-like subfamily. In terms of assembly, homodimer and homohexamer; behaves as a monomer in solution. As to expression, highly expressed in siliques and at lower levels in roots, leaves and flowers.

The enzyme catalyses 5-diphospho-1D-myo-inositol 1,2,3,4,6-pentakisphosphate + H2O = 1D-myo-inositol hexakisphosphate + phosphate + H(+). It carries out the reaction 1,5-bis(diphospho)-1D-myo-inositol 2,3,4,6-tetrakisphosphate + H2O = 1-diphospho-1D-myo-inositol 2,3,4,5,6-pentakisphosphate + phosphate + 2 H(+). The catalysed reaction is 3,5-bis(diphospho)-1D-myo-inositol 1,2,4,6-tetrakisphosphate + H2O = 3-diphospho-1D-myo-inositol 1,2,4,5,6-pentakisphosphate + phosphate + 2 H(+). It catalyses the reaction 6-diphospho-1D-myo-inositol pentakisphosphate + H2O = 1D-myo-inositol hexakisphosphate + phosphate + H(+). The enzyme catalyses 5-diphospho-1D-myo-inositol 1,3,4,6-tetrakisphosphate + H2O = 1D-myo-inositol 1,3,4,5,6-pentakisphosphate + phosphate + H(+). Inhibited by manganese, calcium and zinc ions but not magnesium ions. In terms of biological role, cleaves the beta-phosphate at the 5-position of soluble inositol pyrophosphates. Has highest activity on 5-diphosphoinositol 1,2,3,4,6-pentakisphosphate (5-InsP(7)), 1,5-bis-diphosphoinositol 2,3,4,6-tetrakisphosphate (1,5-InsP(8)) and 3,5-InsP(8), but has weak activity against 1-diphosphoinositol 2,3,4,5,6-pentakisphosphate (1-InsP(7)). Dephosphorylates the phosphoinositides PI(3,4,5)P3, PI(3,5)P2, but not PI(3)P, PI(3,4)P2 or PI(4,5)P2. Possesses phosphotyrosine phosphatase activity in vitro, and can hydrolyze para-nitrophenyl phosphate, O-methylfluorescein phosphate, polyphosphate and ATP. This chain is Inositol diphosphatase DSP1, found in Arabidopsis thaliana (Mouse-ear cress).